We begin with the raw amino-acid sequence, 367 residues long: Alanine racemase (367 aa).

The active-site Proton acceptor; specific for D-alanine is Lys-40. Lys-40 is modified (N6-(pyridoxal phosphate)lysine). A substrate-binding site is contributed by Arg-136. Tyr-263 (proton acceptor; specific for L-alanine) is an active-site residue. Met-310 provides a ligand contact to substrate.

The protein belongs to the alanine racemase family. Pyridoxal 5'-phosphate serves as cofactor.

It catalyses the reaction L-alanine = D-alanine. The protein operates within amino-acid biosynthesis; D-alanine biosynthesis; D-alanine from L-alanine: step 1/1. Its function is as follows. Catalyzes the interconversion of L-alanine and D-alanine. May also act on other amino acids. This Streptococcus thermophilus (strain ATCC BAA-250 / LMG 18311) protein is Alanine racemase (alr).